The chain runs to 391 residues: Glycerol-3-phosphate dehydrogenase [NAD(+)] (391 aa).

Residues 46–51 (GSGNWG), phenylalanine 78, and phenylalanine 134 contribute to the NAD(+) site. Lysine 157 contacts substrate. NAD(+) is bound at residue alanine 190. Lysine 250 acts as the Proton acceptor in catalysis. Residues arginine 315 and glutamine 344 each contribute to the NAD(+) site. Residue 315–316 (RN) participates in substrate binding.

This sequence belongs to the NAD-dependent glycerol-3-phosphate dehydrogenase family.

It catalyses the reaction sn-glycerol 3-phosphate + NAD(+) = dihydroxyacetone phosphate + NADH + H(+). This chain is Glycerol-3-phosphate dehydrogenase [NAD(+)] (GPD), found in Candida tropicalis (Yeast).